The chain runs to 61 residues: UPF0434 protein PSEEN1604 (61 aa).

This sequence belongs to the UPF0434 family.

This is UPF0434 protein PSEEN1604 from Pseudomonas entomophila (strain L48).